The sequence spans 1153 residues: AP-3 complex subunit delta-1 (1153 aa).

An N-acetylalanine modification is found at Ala2. HEAT repeat units lie at residues Lys34–Asp71, Phe77–Asn114, Asp142–Glu179, Ser180–Lys216, Arg254–Ser292, Ala299–Lys336, Val338–Leu373, Glu375–Tyr409, Thr431–Leu468, Gln497–Gln535, and Ala548–Leu585. Disordered regions lie at residues Glu629–Thr696 and Lys726–Ser920. A phosphoserine mark is found at Ser632, Ser634, Ser636, and Ser658. A compositionally biased stretch (basic and acidic residues) spans Glu639–Glu675. A coiled-coil region spans residues Glu659–Asn679. Position 688 is a phosphoserine (Ser688). Residues Val725–Arg756 adopt a coiled-coil conformation. Residues Lys726–Asp740 show a composition bias toward basic and acidic residues. A compositionally biased stretch (basic residues) spans Lys741 to Ser758. Residues Ser758 and Ser759 each carry the phosphoserine modification. Thr762 carries the phosphothreonine modification. 5 positions are modified to phosphoserine: Ser764, Ala785, Ser788, Lys828, and Ser829. The span at Val777–Asp794 shows a compositional bias: acidic residues. Residues Pro795 to Lys839 show a composition bias toward basic and acidic residues. Composition is skewed to basic residues over residues Lys840–Glu853 and Glu863–Lys879. The stretch at Lys845 to Ser869 forms a coiled coil. A Phosphoserine modification is found at Val931.

Belongs to the adaptor complexes large subunit family. In terms of assembly, AP-3 associates with the BLOC-1 complex. Adaptor protein complex 3 (AP-3) is a heterotetramer composed of two large adaptins (delta-type subunit AP3D1 and beta-type subunit AP3B1 or AP3B2), a medium adaptin (mu-type subunit AP3M1 or AP3M2) and a small adaptin (sigma-type subunit APS1 or AP3S2). Interacts with SLC30A2. Interacts with CLN3 (via dileucine motif); this interaction facilitates lysosomal targeting. As to expression, present in all adult tissues examined with the highest levels in skeletal muscle, heart, pancreas and testis.

It localises to the cytoplasm. Its subcellular location is the golgi apparatus membrane. Functionally, part of the AP-3 complex, an adaptor-related complex which is not clathrin-associated. The complex is associated with the Golgi region as well as more peripheral structures. It facilitates the budding of vesicles from the Golgi membrane and may be directly involved in trafficking to lysosomes. Involved in process of CD8+ T-cell and NK cell degranulation. In concert with the BLOC-1 complex, AP-3 is required to target cargos into vesicles assembled at cell bodies for delivery into neurites and nerve terminals. The sequence is that of AP-3 complex subunit delta-1 (AP3D1) from Homo sapiens (Human).